A 502-amino-acid chain; its full sequence is Probable ADP-dependent glucokinase (502 aa).

A signal peptide spans M1–S32. One can recognise an ADPK domain in the interval S44 to N497. 2 N-linked (GlcNAc...) asparagine glycosylation sites follow: N89 and N190. Positions 290, 320, and 481 each coordinate Mg(2+). The active-site Proton acceptor is the D481.

Belongs to the ADP-dependent glucokinase family. Monomer. Mg(2+) is required as a cofactor.

Its subcellular location is the secreted. It catalyses the reaction D-glucose + ADP = D-glucose 6-phosphate + AMP + H(+). Its pathway is carbohydrate degradation; glycolysis. Its function is as follows. Catalyzes the phosphorylation of D-glucose to D-glucose 6-phosphate using ADP as the phosphate donor. GDP and CDP can replace ADP, but with reduced efficiency. In Caenorhabditis elegans, this protein is Probable ADP-dependent glucokinase.